We begin with the raw amino-acid sequence, 220 residues long: V-set and transmembrane domain-containing protein 2-like protein (220 aa).

Positions 1–24 (MGAPLAAALGALHYLALFLQLGGA) are cleaved as a signal peptide. Residues 41 to 158 (ALFTETPHDM…DGGRGVPRVL (118 aa)) enclose the Ig-like domain. A disulfide bond links Cys-62 and Cys-142. Pro residues predominate over residues 165–180 (PAPPRAPRPRGQPPGE). A disordered region spans residues 165–220 (PAPPRAPRPRGQPPGEEPGRGPTLLFLIILPGTGSGTPREAEPHQPHAGGCPARQS).

This is V-set and transmembrane domain-containing protein 2-like protein (Vstm2l) from Mus musculus (Mouse).